Consider the following 482-residue polypeptide: L-propargylglycine--L-glutamate ligase (482 aa).

The enzyme catalyses L-propargylglycine + L-glutamate + ATP = L-gamma-glutamyl-L-propargylglycine + ADP + phosphate + H(+). It participates in amino-acid metabolism. The protein operates within antibiotic biosynthesis. Functionally, involved in the biosynthesis of terminal alkyne-containing amino acids such as L-beta-ethynylserine, that are produced as antibiotics by S.cattleya. Catalyzes the ATP-dependent ligation of L-propargylglycine to L-glutamate to form the dipeptide L-gamma-glutamyl-L-propargylglycine. Is selective for L-propargylglycine over norvaline, allylglycine and the standard proteinogenic amino acids, except L-cysteine which can be used as a substrate to a lesser extent. The protein is L-propargylglycine--L-glutamate ligase of Streptantibioticus cattleyicolor (strain ATCC 35852 / DSM 46488 / JCM 4925 / NBRC 14057 / NRRL 8057) (Streptomyces cattleya).